The primary structure comprises 547 residues: ATP synthase subunit beta, mitochondrial (547 aa).

Residues 1 to 45 (MASRRLLSSFLRSSTRRSLRPSFSNPRPSFLTSYCSSPASILRRY) constitute a mitochondrion transit peptide. Residues 52-62 (KEPAASKPAGT) show a composition bias toward low complexity. Residues 52–74 (KEPAASKPAGTAGTGKGTITDEK) form a disordered region. 226–233 (GGDWVGKT) contacts ATP.

It belongs to the ATPase alpha/beta chains family. F-type ATPases have 2 components, CF(1) - the catalytic core - and CF(0) - the membrane proton channel. CF(1) has five subunits: alpha(3), beta(3), gamma(1), delta(1), epsilon(1). CF(0) has three main subunits: a, b and c.

The protein resides in the mitochondrion. It localises to the mitochondrion inner membrane. The enzyme catalyses ATP + H2O + 4 H(+)(in) = ADP + phosphate + 5 H(+)(out). In terms of biological role, mitochondrial membrane ATP synthase (F(1)F(0) ATP synthase or Complex V) produces ATP from ADP in the presence of a proton gradient across the membrane which is generated by electron transport complexes of the respiratory chain. F-type ATPases consist of two structural domains, F(1) - containing the extramembraneous catalytic core, and F(0) - containing the membrane proton channel, linked together by a central stalk and a peripheral stalk. During catalysis, ATP synthesis in the catalytic domain of F(1) is coupled via a rotary mechanism of the central stalk subunits to proton translocation. Subunits alpha and beta form the catalytic core in F(1). Rotation of the central stalk against the surrounding alpha(3)beta(3) subunits leads to hydrolysis of ATP in three separate catalytic sites on the beta subunits. This is ATP synthase subunit beta, mitochondrial (ATPB) from Daucus carota (Wild carrot).